Here is a 295-residue protein sequence, read N- to C-terminus: NAD kinase (295 aa).

Catalysis depends on aspartate 72, which acts as the Proton acceptor. NAD(+)-binding positions include 72–73 (DG), 146–147 (ND), arginine 157, lysine 174, aspartate 176, 187–192 (TAYALS), and glutamine 247.

The protein belongs to the NAD kinase family. A divalent metal cation is required as a cofactor.

It localises to the cytoplasm. The catalysed reaction is NAD(+) + ATP = ADP + NADP(+) + H(+). In terms of biological role, involved in the regulation of the intracellular balance of NAD and NADP, and is a key enzyme in the biosynthesis of NADP. Catalyzes specifically the phosphorylation on 2'-hydroxyl of the adenosine moiety of NAD to yield NADP. The protein is NAD kinase of Azotobacter vinelandii (strain DJ / ATCC BAA-1303).